A 511-amino-acid chain; its full sequence is MKCLLCLAFLFIGVNCKFTIVFPHNQKGNWKNVPSNYHYCPSSSDLNWHNDLIGTALQVKMPKSHKAIQADGWMCHASKWITTCDFRWYGPKYITHSIQSFTPSVEQCKESIEQTKQGTWLNPGFPPQSCGYATVTDAEAVIVQVTPHHVLVDEYTGEWVDSQFINGKCSNDICLTVHNSTTWHSDYKVKGLCDSNLISMDITFFSEDGELSSLGKAGTGFRSNYFAYETGDKACKMQYCKHWGVRLPSGVWFEMADKDLFAAAKFPECPEGSSISAPSQTSVDVSLIQDVERILDYSLCQETWSKIRAGLPISPVDLSYLAPKNPGTGPAFTIINGTLKYFETRYIRVDIAAPILSRMVGMISGTNTERELWEDWAPYEDVEIGPNGVLRTSSGYKFPLYMIGHGMLDSDLHLSSKVQVFEHPHIQDAASQLPDDETLFFGDTGLSKNPIELVEGWFSGWKSSIASFFFIIGLIIGLFLVLRVGIYLCIKLKHTRKRKIYADIEMNRLGK.

The signal sequence occupies residues 1-16 (MKCLLCLAFLFIGVNC). Residues 17 to 467 (KFTIVFPHNQ…FSGWKSSIAS (451 aa)) are Virion surface-facing. The tract at residues 18 to 35 (FTIVFPHNQKGNWKNVPS) is trimerization. 6 cysteine pairs are disulfide-bonded: cysteine 40/cysteine 300, cysteine 75/cysteine 108, cysteine 84/cysteine 130, cysteine 169/cysteine 174, cysteine 193/cysteine 240, and cysteine 235/cysteine 269. Residues 53–172 (IGTALQVKMP…QFINGKCSND (120 aa)) form a fusion peptide region. Asparagine 179 carries an N-linked (GlcNAc...) asparagine; by host glycan. Residues 259 to 309 (DLFAAAKFPECPEGSSISAPSQTSVDVSLIQDVERILDYSLCQETWSKIRA) form a trimerization region. N-linked (GlcNAc...) asparagine; by host glycosylation is present at asparagine 336. A trimerization region spans residues 383-405 (EIGPNGVLRTSSGYKFPLYMIGH). The helical transmembrane segment at 468 to 488 (FFFIIGLIIGLFLVLRVGIYL) threads the bilayer. A lipid anchor (S-palmitoyl cysteine; by host) is attached at cysteine 489. At 489–511 (CIKLKHTRKRKIYADIEMNRLGK) the chain is on the intravirion side. Positions 496-506 (RKRKIYADIEM) match the basolateral targeting ex vivo motif.

The protein belongs to the vesiculovirus glycoprotein family. Homotrimer. Interacts with host LDL at target cell surface. Post-translationally, glycosylated by host. Palmitoylated by host.

The protein localises to the virion membrane. It is found in the host membrane. Functionally, attaches the virus to host LDL receptors, inducing clathrin-dependent endocytosis of the virion. In the endosome, the acidic pH induces conformational changes in the glycoprotein trimer, which trigger fusion between virus and endosomal membrane. In Aedes (Bovine), this protein is Glycoprotein (G).